Here is a 68-residue protein sequence, read N- to C-terminus: U-actitoxin-Avt1 (68 aa).

Residues 1 to 22 (MNSKAIISVFLIMLVVVSCTQA) form the signal peptide. A propeptide spanning residues 23 to 40 (TYETEDDDEPGPRHSEKR) is cleaved from the precursor. The segment at 24 to 50 (YETEDDDEPGPRHSEKRSCARGCGGDS) is disordered. Basic and acidic residues predominate over residues 32-41 (PGPRHSEKRS). 3 cysteine pairs are disulfide-bonded: C42/C54, C46/C59, and C52/C66.

Stable protein with probable toxin activity. Does not show activity on all channels tested. Shows no hemolytic activity on rat erythrocytes. The sequence is that of U-actitoxin-Avt1 from Aulactinia veratra (Green snakelock anemone).